We begin with the raw amino-acid sequence, 134 residues long: 6,7-dimethyl-8-ribityllumazine synthase (134 aa).

Residues Phe-12, 44-46 (VFD), and 68-70 (SVI) contribute to the 5-amino-6-(D-ribitylamino)uracil site. (2S)-2-hydroxy-3-oxobutyl phosphate is bound at residue 73–74 (ET). His-76 (proton donor) is an active-site residue. Leu-101 serves as a coordination point for 5-amino-6-(D-ribitylamino)uracil. Arg-116 contacts (2S)-2-hydroxy-3-oxobutyl phosphate.

This sequence belongs to the DMRL synthase family.

The catalysed reaction is (2S)-2-hydroxy-3-oxobutyl phosphate + 5-amino-6-(D-ribitylamino)uracil = 6,7-dimethyl-8-(1-D-ribityl)lumazine + phosphate + 2 H2O + H(+). Its pathway is cofactor biosynthesis; riboflavin biosynthesis; riboflavin from 2-hydroxy-3-oxobutyl phosphate and 5-amino-6-(D-ribitylamino)uracil: step 1/2. Its function is as follows. Catalyzes the formation of 6,7-dimethyl-8-ribityllumazine by condensation of 5-amino-6-(D-ribitylamino)uracil with 3,4-dihydroxy-2-butanone 4-phosphate. This is the penultimate step in the biosynthesis of riboflavin. The polypeptide is 6,7-dimethyl-8-ribityllumazine synthase (Methanosarcina mazei (strain ATCC BAA-159 / DSM 3647 / Goe1 / Go1 / JCM 11833 / OCM 88) (Methanosarcina frisia)).